A 229-amino-acid polypeptide reads, in one-letter code: UPF0173 metal-dependent hydrolase SERP1270 (229 aa).

Belongs to the UPF0173 family.

The chain is UPF0173 metal-dependent hydrolase SERP1270 from Staphylococcus epidermidis (strain ATCC 35984 / DSM 28319 / BCRC 17069 / CCUG 31568 / BM 3577 / RP62A).